The sequence spans 187 residues: GTP cyclohydrolase 1 (187 aa).

Zn(2+)-binding residues include Cys76, His79, and Cys148.

This sequence belongs to the GTP cyclohydrolase I family. In terms of assembly, toroid-shaped homodecamer, composed of two pentamers of five dimers.

It catalyses the reaction GTP + H2O = 7,8-dihydroneopterin 3'-triphosphate + formate + H(+). It functions in the pathway cofactor biosynthesis; 7,8-dihydroneopterin triphosphate biosynthesis; 7,8-dihydroneopterin triphosphate from GTP: step 1/1. This chain is GTP cyclohydrolase 1, found in Streptococcus thermophilus (strain CNRZ 1066).